Consider the following 383-residue polypeptide: Pheromone-regulated membrane protein 10 (383 aa).

At 1-65 (MIVSFGDATT…ILADTNLYPP (65 aa)) the chain is on the cytoplasmic side. Residues 66–86 (WMCVLLYAFCSAMVTPYAFGG) form a helical membrane-spanning segment. Residue D87 is a topological domain, extracellular. Residues 88 to 108 (WVNLAISFFMGLCVGSLQFIL) form a helical membrane-spanning segment. The Cytoplasmic segment spans residues 109–117 (SQKSYMYSN). The helical transmembrane segment at 118–138 (VFEISASIVVSFCGRAFGSIP) threads the bilayer. Residues 139 to 141 (RSH) are Extracellular-facing. The helical transmembrane segment at 142-162 (ICFGAVTQGSLALILPGYIIL) threads the bilayer. The Cytoplasmic segment spans residues 163 to 180 (CGALELQSRSLVAGAVRM). The chain crosses the membrane as a helical span at residues 181–201 (FYAIIYSLFLGFGITLGSALF). The Extracellular portion of the chain corresponds to 202–216 (GWMYHNATNEISCPQ). The chain crosses the membrane as a helical span at residues 217 to 237 (LISPWFRFLFVPAFTISISLL). Residues 238 to 241 (NQAH) are Cytoplasmic-facing. Residues 242–262 (ISQLPVMVFISCTGYVVTYWA) traverse the membrane as a helical segment. The Extracellular portion of the chain corresponds to 263-271 (GKHFANSTE). The helical transmembrane segment at 272-292 (FTAALAAFVIGVLGNLYSRIW) threads the bilayer. Residue K293 is a topological domain, cytoplasmic. The chain crosses the membrane as a helical span at residues 294–314 (GLAVSAMLPAIFVQVPSGIAS). The Extracellular portion of the chain corresponds to 315–352 (QNSLLSGLQSANTIVNANETITTSTSDPSSSMSFGMTM). A helical transmembrane segment spans residues 353–373 (IQVCVGISVGLFASSLFVYPF). Residues 374–383 (GKKKTGLFSL) lie on the Cytoplasmic side of the membrane.

Belongs to the ThrE exporter (TC 2.A.79) family.

It is found in the membrane. The sequence is that of Pheromone-regulated membrane protein 10 (PRM10) from Saccharomyces cerevisiae (strain ATCC 204508 / S288c) (Baker's yeast).